Here is a 351-residue protein sequence, read N- to C-terminus: Small ribosomal subunit protein uS2 (351 aa).

A disordered region spans residues Gln-302–Asn-351. The segment covering Thr-340 to Asn-351 has biased composition (basic and acidic residues).

Belongs to the universal ribosomal protein uS2 family.

This chain is Small ribosomal subunit protein uS2, found in Ureaplasma urealyticum serovar 10 (strain ATCC 33699 / Western).